Here is a 1651-residue protein sequence, read N- to C-terminus: Protein Wiz (1651 aa).

The tract at residues 1–79 (MEGSLAGSLA…TPDGRGPWEH (79 aa)) is disordered. Residues alanine 11, arginine 14, asparagine 29, glycine 32, glycine 39, glycine 42, and glutamate 258 each participate in a glycyl lysine isopeptide (Lys-Gly) (interchain with G-Cter in SUMO2) cross-link. 3 consecutive C2H2-type zinc fingers follow at residues 267–289 (FPCI…MSQH), 304–326 (LACG…RQLH), and 353–375 (LQCP…AKLH). Phenylalanine 313 is covalently cross-linked (Glycyl lysine isopeptide (Lys-Gly) (interchain with G-Cter in SUMO2)). The tract at residues 376–399 (MREPPGQTTKEPFGGSSGAGSPSP) is disordered. Over residues 386-399 (EPFGGSSGAGSPSP) the composition is skewed to low complexity. The C2H2-type 4 zinc-finger motif lies at 416–439 (SACVFCGFPAPSESLLREHVRLVH). The segment at 546–578 (LGRNKSTVHPQGLGERRRPWSEEEEEEEEEEDV) is disordered. Residues 567–578 (EEEEEEEEEEDV) show a composition bias toward acidic residues. 2 consecutive C2H2-type zinc fingers follow at residues 701–723 (RKCP…VRGH) and 769–791 (MRCD…ARAH). Positions 819 to 843 (AEQPPSPLGREPGGPPGSFLTSRRP) are disordered. The C2H2-type 7 zinc finger occupies 870 to 892 (TTCEVCGACFETRKGLSSHARSH). Residues lysine 883, lysine 939, lysine 955, lysine 967, and lysine 988 each participate in a glycyl lysine isopeptide (Lys-Gly) (interchain with G-Cter in SUMO2) cross-link. Residues 972–1038 (FSAKGLGHPP…GPLNLTSGPE (67 aa)) form a disordered region. Residues 984–994 (PLLKKTPLALA) are compositionally biased toward low complexity. At serine 996 the chain carries Phosphoserine. Threonine 998 carries the post-translational modification Phosphothreonine. Residues lysine 1000 and lysine 1005 each participate in a glycyl lysine isopeptide (Lys-Gly) (interchain with G-Cter in SUMO2) cross-link. Phosphoserine occurs at positions 1006, 1012, 1017, and 1025. An interaction with CTBP1 and CTBP2 1 region spans residues 1030–1034 (PLNLT). Residues 1043–1065 (IRCEFCGEFFENRKGLSSHARSH) form a C2H2-type 8 zinc finger. Residue lysine 1056 forms a Glycyl lysine isopeptide (Lys-Gly) (interchain with G-Cter in SUMO2) linkage. 2 positions are modified to phosphoserine: serine 1079 and serine 1106. The segment at 1091 to 1174 (RTQSRPGGPP…PGLAAPSLPK (84 aa)) is disordered. The span at 1097–1106 (GGPPNPPGPS) shows a compositional bias: pro residues. Glycyl lysine isopeptide (Lys-Gly) (interchain with G-Cter in SUMO2) cross-links involve residues lysine 1108 and lysine 1112. 3 positions are modified to phosphoserine: serine 1122, serine 1127, and serine 1134. Residues lysine 1138 and lysine 1139 each participate in a glycyl lysine isopeptide (Lys-Gly) (interchain with G-Cter in SUMO2) cross-link. 2 positions are modified to phosphoserine: serine 1146 and serine 1151. Lysine 1162 carries the N6,N6,N6-trimethyllysine; by EHMT2; alternate modification. Lysine 1162 carries the N6,N6-dimethyllysine; by EHMT2; alternate modification. Lysine 1177 participates in a covalent cross-link: Glycyl lysine isopeptide (Lys-Gly) (interchain with G-Cter in SUMO2). Residues 1214 to 1218 (PLNLS) are interaction with CTBP1 and CTBP2 2. The segment at 1227–1249 (IRCEFCGEFFENRKGLSSHARSH) adopts a C2H2-type 9 zinc-finger fold. Lysine 1240 participates in a covalent cross-link: Glycyl lysine isopeptide (Lys-Gly) (interchain with G-Cter in SUMO2). A Phosphoserine modification is found at serine 1263. A Glycyl lysine isopeptide (Lys-Gly) (interchain with G-Cter in SUMO2) cross-link involves residue lysine 1282. A disordered region spans residues 1283–1331 (KEPPAGDLAPALAEDGPPTVAPGPVQSPLPLSPLAGRPGKPGAGPAQVP). Residues 1301–1313 (TVAPGPVQSPLPL) are compositionally biased toward pro residues. 2 positions are modified to phosphoserine: serine 1309 and serine 1314. Over residues 1315-1328 (PLAGRPGKPGAGPA) the composition is skewed to low complexity. Residues lysine 1343, lysine 1356, lysine 1370, lysine 1372, and lysine 1382 each participate in a glycyl lysine isopeptide (Lys-Gly) (interchain with G-Cter in SUMO2) cross-link. Residues 1397–1419 (ACCELCGLYFENRKALASHARAH) form a C2H2-type 10 zinc finger. Glycyl lysine isopeptide (Lys-Gly) (interchain with G-Cter in SUMO2) cross-links involve residues lysine 1448, lysine 1464, and lysine 1477. The tract at residues 1463–1554 (TKKFRSAGHG…ASAARGGEDT (92 aa)) is disordered. The residue at position 1480 (serine 1480) is a Phosphoserine. The span at 1481–1493 (LGLAPGGLAVVGR) shows a compositional bias: low complexity. Phosphoserine is present on serine 1517. A Glycyl lysine isopeptide (Lys-Gly) (interchain with G-Cter in SUMO1); alternate cross-link involves residue lysine 1523. Lysine 1523 participates in a covalent cross-link: Glycyl lysine isopeptide (Lys-Gly) (interchain with G-Cter in SUMO2); alternate. Positions 1523-1541 (KAEEHQRQNINKFERRQAR) are enriched in basic and acidic residues. Residues lysine 1534 and lysine 1560 each participate in a glycyl lysine isopeptide (Lys-Gly) (interchain with G-Cter in SUMO2) cross-link. The C2H2-type 11 zinc-finger motif lies at 1596-1622 (LKCRFCEVEFQGPLSIQEEWVRHLQRH). The interval 1629–1651 (SKADPPPEESQAPQAQTAAAEAP) is disordered. Residue lysine 1630 forms a Glycyl lysine isopeptide (Lys-Gly) (interchain with G-Cter in SUMO2) linkage. A compositionally biased stretch (low complexity) spans 1637–1651 (ESQAPQAQTAAAEAP).

The protein belongs to the krueppel C2H2-type zinc-finger protein family. As to quaternary structure, interacts with EHMT1, EHMT2, CTBP1 and CTBP2. Part of a complex containing at least CDYL, REST, WIZ, SETB1, EHMT1 and EHMT2.

It localises to the nucleus. In terms of biological role, may link EHMT1 and EHMT2 histone methyltransferases to the CTBP corepressor machinery. May be involved in EHMT1-EHMT2 heterodimer formation and stabilization. In Homo sapiens (Human), this protein is Protein Wiz (WIZ).